Reading from the N-terminus, the 431-residue chain is Adenylosuccinate synthetase (431 aa).

Residues 15–21 and 43–45 each bind GTP; these read GDEGKGK and GHT. The active-site Proton acceptor is the Asp16. Positions 16 and 43 each coordinate Mg(2+). IMP contacts are provided by residues 16 to 19, 41 to 44, Thr135, Arg149, Asn227, Thr242, and Arg306; these read DEGK and NAGH. His44 (proton donor) is an active-site residue. 302 to 308 is a substrate binding site; the sequence is VTTGRKR. GTP-binding positions include Arg308, 334–336, and 416–418; these read KLD and GVG.

The protein belongs to the adenylosuccinate synthetase family. As to quaternary structure, homodimer. Mg(2+) serves as cofactor.

The protein localises to the cytoplasm. It carries out the reaction IMP + L-aspartate + GTP = N(6)-(1,2-dicarboxyethyl)-AMP + GDP + phosphate + 2 H(+). It participates in purine metabolism; AMP biosynthesis via de novo pathway; AMP from IMP: step 1/2. In terms of biological role, plays an important role in the de novo pathway and in the salvage pathway of purine nucleotide biosynthesis. Catalyzes the first committed step in the biosynthesis of AMP from IMP. The protein is Adenylosuccinate synthetase of Monosiga brevicollis (Choanoflagellate).